The chain runs to 319 residues: tRNA uridine(34) hydroxylase (319 aa).

The Rhodanese domain maps to 127–221 (KQEDTVIIDA…YGKDPEVQGE (95 aa)). Catalysis depends on C181, which acts as the Cysteine persulfide intermediate.

Belongs to the TrhO family.

The enzyme catalyses uridine(34) in tRNA + AH2 + O2 = 5-hydroxyuridine(34) in tRNA + A + H2O. In terms of biological role, catalyzes oxygen-dependent 5-hydroxyuridine (ho5U) modification at position 34 in tRNAs. The sequence is that of tRNA uridine(34) hydroxylase from Bacillus cereus (strain ZK / E33L).